Reading from the N-terminus, the 644-residue chain is Exoribonuclease 2 (644 aa).

An RNB domain is found at 189 to 516 (REDLTALNFV…NHRLLKAMIT (328 aa)). Positions 561 to 643 (DTRFTAEIID…ETRNVIARPV (83 aa)) constitute an S1 motif domain.

This sequence belongs to the RNR ribonuclease family. RNase II subfamily.

It is found in the cytoplasm. The catalysed reaction is Exonucleolytic cleavage in the 3'- to 5'-direction to yield nucleoside 5'-phosphates.. In terms of biological role, involved in mRNA degradation. Hydrolyzes single-stranded polyribonucleotides processively in the 3' to 5' direction. This chain is Exoribonuclease 2, found in Yersinia pestis bv. Antiqua (strain Antiqua).